The sequence spans 424 residues: Histidine--tRNA ligase (424 aa).

Belongs to the class-II aminoacyl-tRNA synthetase family. As to quaternary structure, homodimer.

It is found in the cytoplasm. It catalyses the reaction tRNA(His) + L-histidine + ATP = L-histidyl-tRNA(His) + AMP + diphosphate + H(+). The sequence is that of Histidine--tRNA ligase from Shewanella denitrificans (strain OS217 / ATCC BAA-1090 / DSM 15013).